We begin with the raw amino-acid sequence, 46 residues long: Defensin Tk-AMP-D6.1 (46 aa).

4 disulfide bridges follow: Cys3/Cys46, Cys14/Cys34, Cys20/Cys40, and Cys24/Cys42.

Functionally, plant defense peptide. This chain is Defensin Tk-AMP-D6.1, found in Triticum kiharae (Wheat).